The following is a 380-amino-acid chain: Putative 8-amino-7-oxononanoate synthase (380 aa).

Position 18 (R18) interacts with substrate. Pyridoxal 5'-phosphate is bound at residue 106–107 (GY). H131 provides a ligand contact to substrate. Residues S179, 205 to 208 (DEAH), and 236 to 239 (TFGK) each bind pyridoxal 5'-phosphate. K239 bears the N6-(pyridoxal phosphate)lysine mark. Residue T352 participates in substrate binding.

It belongs to the class-II pyridoxal-phosphate-dependent aminotransferase family. BioF subfamily. Homodimer. Pyridoxal 5'-phosphate serves as cofactor.

The enzyme catalyses 6-carboxyhexanoyl-[ACP] + L-alanine + H(+) = (8S)-8-amino-7-oxononanoate + holo-[ACP] + CO2. It participates in cofactor biosynthesis; biotin biosynthesis. In terms of biological role, catalyzes the decarboxylative condensation of pimeloyl-[acyl-carrier protein] and L-alanine to produce 8-amino-7-oxononanoate (AON), [acyl-carrier protein], and carbon dioxide. This is Putative 8-amino-7-oxononanoate synthase (bioF) from Haemophilus influenzae (strain ATCC 51907 / DSM 11121 / KW20 / Rd).